Reading from the N-terminus, the 344-residue chain is L-rhamnose-proton symporter (344 aa).

The next 10 helical transmembrane spans lie at 4–24, 38–58, 68–88, 101–121, 137–157, 175–195, 214–234, 259–279, 290–310, and 323–343; these read AITMGIFWHLIGAASAACFYA, WSVGGIVSWIILPWAISALLL, FSLSTLLPVFLFGAMWGIGNI, MGIGIAIGITLIVGTLMTPII, TLLGVLVALIGVGIVTRAGQL, LVLAVMCGIFSAGMSFAMNAA, LPSYVVIMGGGAIINLGFCFI, VLLSVLGGLMWYLQFFFYAWG, ISWMLHMSFYVLCGGIVGLVL, and VLSLGCVVIIVAANIVGIGMA.

This sequence belongs to the L-rhamnose transporter (TC 2.A.7.6) family.

The protein resides in the cell inner membrane. It carries out the reaction L-rhamnopyranose(in) + H(+)(in) = L-rhamnopyranose(out) + H(+)(out). In terms of biological role, uptake of L-rhamnose across the cytoplasmic membrane with the concomitant transport of protons into the cell (symport system). This Escherichia coli O1:K1 / APEC protein is L-rhamnose-proton symporter.